A 121-amino-acid chain; its full sequence is Small ribosomal subunit protein uS12c (121 aa).

It belongs to the universal ribosomal protein uS12 family. In terms of assembly, part of the 30S ribosomal subunit.

Its subcellular location is the plastid. It is found in the apicoplast. With S4 and S5 plays an important role in translational accuracy. Located at the interface of the 30S and 50S subunits. The sequence is that of Small ribosomal subunit protein uS12c (rps12) from Toxoplasma gondii.